The primary structure comprises 128 residues: Insulin-like growth factor 2 (128 aa).

The first 24 residues, 1–24, serve as a signal peptide directing secretion; sequence MGISMGKSMLVLLTFLAFASCCIA. Residues 25–52 form a b region; it reads AYRPSETLCGGELVDTLQFVCGDRGFYF. 3 disulfide bridges follow: C33–C71, C45–C84, and C70–C75. The interval 53–64 is c; the sequence is SRPASRVSRRSR. The a stretch occupies residues 65 to 85; the sequence is GIVEECCFRSCDLALLETYCA. Residues 86–91 are d; it reads TPAKSE. Residues 92-128 constitute a propeptide, e peptide; sequence RDVSASLAVLPDNFPRYPVGKFFQYDTWRQSTQRLRR.

The protein belongs to the insulin family. As to quaternary structure, interacts with MYORG; this interaction is required for IGF2 secretion. Interacts with integrins ITGAV:ITGB3 and ITGA6:ITGB4; integrin-binding is required for IGF2 signaling. Proteolytically processed by PCSK4, proIGF2 is cleaved at Arg-128 and Arg-92 to generate big-IGF2 and mature IGF2.

It localises to the secreted. The insulin-like growth factors possess growth-promoting activity. Major fetal growth hormone in mammals. Plays a key role in regulating fetoplacental development. IGF2 is influenced by placental lactogen. Also involved in tissue differentiation. In adults, involved in glucose metabolism in adipose tissue, skeletal muscle and liver. Acts as a ligand for integrin which is required for IGF2 signaling. Positively regulates myogenic transcription factor MYOD1 function by facilitating the recruitment of transcriptional coactivators, thereby controlling muscle terminal differentiation. Inhibits myoblast differentiation and metabolism via increasing the mitochondrial respiration rate. In terms of biological role, preptin undergoes glucose-mediated co-secretion with insulin, and acts as a physiological amplifier of glucose-mediated insulin secretion. Exhibits osteogenic properties by increasing osteoblast mitogenic activity through phosphoactivation of MAPK1 and MAPK3. This is Insulin-like growth factor 2 from Cavia porcellus (Guinea pig).